Consider the following 198-residue polypeptide: ADP-ribosylation factor-like protein 3 (198 aa).

Met-1 is modified (N-acetylmethionine). Position 24–31 (24–31 (GLDNAGKT)) interacts with GTP. Lys-50 participates in a covalent cross-link: Glycyl lysine isopeptide (Lys-Gly) (interchain with G-Cter in ubiquitin). Residues 74–78 (DVGGQ) and 133–136 (NKQD) contribute to the GTP site.

The protein belongs to the small GTPase superfamily. Arf family. In terms of assembly, interacts with SYS1 and SLO1.

It localises to the golgi apparatus. Functionally, involved in the targeting of ARL1 to the Golgi. Can bind and hydrolyze GTP. This is ADP-ribosylation factor-like protein 3 (ARL3) from Saccharomyces cerevisiae (strain ATCC 204508 / S288c) (Baker's yeast).